The following is a 481-amino-acid chain: Tagaturonate/fructuronate epimerase (481 aa).

Asp161 acts as the Proton acceptor in catalysis. Residue His162 participates in a divalent metal cation binding. Glu266 serves as the catalytic Proton donor. Positions 308 and 341 each coordinate a divalent metal cation.

Belongs to the UxaE family. A divalent metal cation is required as a cofactor.

It catalyses the reaction keto-D-tagaturonate = keto-D-fructuronate. Functionally, catalyzes the epimerization of D-tagaturonate (D-TagA) to D-fructuronate (D-FruA). The protein is Tagaturonate/fructuronate epimerase of Thermotoga maritima (strain ATCC 43589 / DSM 3109 / JCM 10099 / NBRC 100826 / MSB8).